The chain runs to 307 residues: MNYLITIIGPTAIGKTSLSIALAKQYNCDIISCDSRQFFKEMRIGTAVPSDEELSQATHHFIQNKSIFEEYTVGDFEKEAITKLDELFSKNNIQIMVGGSGLYADAVLKGFDSFPNIKPEIREKIQEQYDENGIQYLQQKLQELDTEYYSKILSQNPQTLQNPQRMMRFVEVCLGTGKPYSSFLNKDKITRNFTTIIIGLEADREIMYDRINQRVDIMINEGLLAEAEKLYPNKDLNALQTVGYRELFSFFDADFTLNFAIEEIKKNTRRFSKRQITWFKRTENTIWFDYKADTSKIIEVINTKMKH.

Position 9–16 (9–16) interacts with ATP; that stretch reads GPTAIGKT. 11–16 is a substrate binding site; it reads TAIGKT. Interaction with substrate tRNA regions lie at residues 34-37 and 164-168; these read DSRQ and QRMMR.

The protein belongs to the IPP transferase family. Monomer. Mg(2+) is required as a cofactor.

The catalysed reaction is adenosine(37) in tRNA + dimethylallyl diphosphate = N(6)-dimethylallyladenosine(37) in tRNA + diphosphate. Its function is as follows. Catalyzes the transfer of a dimethylallyl group onto the adenine at position 37 in tRNAs that read codons beginning with uridine, leading to the formation of N6-(dimethylallyl)adenosine (i(6)A). This Flavobacterium psychrophilum (strain ATCC 49511 / DSM 21280 / CIP 103535 / JIP02/86) protein is tRNA dimethylallyltransferase.